A 194-amino-acid polypeptide reads, in one-letter code: Early growth response protein 1 (194 aa).

3 consecutive C2H2-type zinc fingers follow at residues 1 to 18 (CDRR…IRIH), 24 to 46 (FQCR…IRTH), and 52 to 74 (FACD…TKIH). The disordered stretch occupies residues 66–88 (ERKRHTKIHLRQKDKKVEKAASV). Positions 69–79 (RHTKIHLRQKD) are enriched in basic residues.

The protein belongs to the EGR C2H2-type zinc-finger protein family.

The protein resides in the nucleus. It is found in the cytoplasm. Transcriptional regulator. Recognizes and binds to the DNA sequence 5'-GCG(T/G)GGGCG-3'(EGR-site) in the promoter region of target genes. Binds double-stranded target DNA, irrespective of the cytosine methylation status. Regulates the transcription of numerous target genes, and thereby plays an important role in regulating the response to growth factors, DNA damage, and ischemia. Plays a role in the regulation of cell survival, proliferation and cell death. Mediates responses to ischemia and hypoxia; regulates the expression of proteins that are involved in inflammatory processes. Plays a role in regulating the expression of circadian clock genes. The protein is Early growth response protein 1 (EGR1) of Coturnix japonica (Japanese quail).